A 228-amino-acid chain; its full sequence is Aquaporin Z (228 aa).

5 consecutive transmembrane segments (helical) span residues 1-21 (MLNK…GGCG), 46-66 (TVLT…NPAV), 82-102 (IPYW…LYVI), 129-149 (MMAG…IILG), and 154-174 (LAPA…IHLV). An NPA 1 motif is present at residues 63 to 65 (NPA). Positions 184-186 (NPA) match the NPA 2 motif. The chain crosses the membrane as a helical span at residues 205–225 (LFWVAPLVGAVIGAIIWKGLL).

The protein belongs to the MIP/aquaporin (TC 1.A.8) family. Homotetramer.

The protein localises to the cell inner membrane. The enzyme catalyses H2O(in) = H2O(out). Channel that permits osmotically driven movement of water in both directions. It is involved in the osmoregulation and in the maintenance of cell turgor during volume expansion in rapidly growing cells. It mediates rapid entry or exit of water in response to abrupt changes in osmolarity. This Brucella suis biovar 1 (strain 1330) protein is Aquaporin Z.